A 469-amino-acid polypeptide reads, in one-letter code: Probable ribonuclease FAU-1 (469 aa).

This sequence belongs to the FAU-1 family.

Probable RNase involved in rRNA stability through maturation and/or degradation of precursor rRNAs. Binds to RNA in loop regions with AU-rich sequences. The polypeptide is Probable ribonuclease FAU-1 (Pyrococcus horikoshii (strain ATCC 700860 / DSM 12428 / JCM 9974 / NBRC 100139 / OT-3)).